Reading from the N-terminus, the 120-residue chain is uncharacterized protein (120 aa).

The interval 79-120 (TGNEIPPEPEQEVVASPVTEQKKAEPSAPPKGSKKKKRGKKK) is disordered. Over residues 110–120 (GSKKKKRGKKK) the composition is skewed to basic residues.

This is an uncharacterized protein from Schizosaccharomyces pombe (strain 972 / ATCC 24843) (Fission yeast).